We begin with the raw amino-acid sequence, 557 residues long: Probable protein kinase UbiB (557 aa).

The Protein kinase domain occupies 121-509 (SFDTVPLASA…RKLQTRVVTA (389 aa)). ATP is bound by residues 127-135 (LASASIAQV) and Lys154. Residue Asp289 is the Proton acceptor of the active site. 2 helical membrane-spanning segments follow: residues 506-526 (VVTA…YGLH) and 535-555 (VPVW…VAWL).

This sequence belongs to the ABC1 family. UbiB subfamily.

It localises to the cell inner membrane. The protein operates within cofactor biosynthesis; ubiquinone biosynthesis [regulation]. Its function is as follows. Is probably a protein kinase regulator of UbiI activity which is involved in aerobic coenzyme Q (ubiquinone) biosynthesis. In Xanthomonas oryzae pv. oryzae (strain MAFF 311018), this protein is Probable protein kinase UbiB.